Here is a 795-residue protein sequence, read N- to C-terminus: MENGGAGTLQIRQVLLFFVLLGMSQAGSETGNFLVMEELQSGSFVGNLAKTLGLEVSELSSRGARVVSNDNKECLQLDTNTGDLLLREMLDREELCGSNEPCVLYFQVLMKNPTQFLQIELQVRDINDHSPVFLEKEMLLEIPENSPVGAVFLLESAKDLDVGINAVKSYTINPNSHFHVKIRVNPDNRKYPELVLDKALDYEERPELSFILTALDGGSPPRSGTALVRVVVVDINDNSPEFEQAFYEVKILENSILGSLVVTVSAWDLDSGTNSELSYTFSHASEDIRKTFEINQKSGDITLTAPLDFEAIESYSIIIQATDGGGLFGKSTVRIQVMDVNDNAPEITVSSITSPIPENTPETVVMVFRIRDRDSGDNGKMVCSIPEDIPFVLKSSVNNYYTLETERPLDRESRAEYNITITVTDLGTPRLKTEHNITVLVSDVNDNAPAFTQTSYALFVRENNSPALHIGSISATDRDSGTNAQVNYSLLPSQDPHLPLASLVSINADNGHLFALRSLDYEALQGFQFRVGATDHGSPALSSEALVRVLVLDANDNSPFVLYPLQNGSAPCTELVPWAAEPGYLVTKVVAVDGDSGQNAWLSYQLLKATEPGLFGVWAHNGEVRTARLLSERDAAKHRLVVLVKDNGEPPRSATATLHVLLVDGFSQPYLPLPEAAPAQAQADSLTVYLVVALASVSSLFLFSVLLFVAVRLCRRSRAAPVGRCSVPEGPFPGHLVDVSGTGTLSQSYHYEVCVTGGSRSNKFKFLKPIIPNFLPQSTGSEVEENPPFQNNLGF.

Positions 1-26 are cleaved as a signal peptide; that stretch reads MENGGAGTLQIRQVLLFFVLLGMSQA. The Extracellular segment spans residues 27-690; that stretch reads GSETGNFLVM…AQADSLTVYL (664 aa). 5 consecutive Cadherin domains span residues 35–133, 138–242, 247–347, 352–451, and 456–561; these read VMEE…SPVF, MLLE…SPEF, YEVK…APEI, ITSP…APAF, and YALF…SPFV. N-linked (GlcNAc...) asparagine glycosylation is found at N418, N436, N487, and N567. The Cadherin 6 domain occupies 568–671; the sequence is GSAPCTELVP…LVDGFSQPYL (104 aa). A helical transmembrane segment spans residues 691–711; that stretch reads VVALASVSSLFLFSVLLFVAV. The Cytoplasmic portion of the chain corresponds to 712 to 795; it reads RLCRRSRAAP…NPPFQNNLGF (84 aa).

It is found in the cell membrane. In terms of biological role, potential calcium-dependent cell-adhesion protein. May be involved in the establishment and maintenance of specific neuronal connections in the brain. This Homo sapiens (Human) protein is Protocadherin beta-12 (PCDHB12).